The primary structure comprises 82 residues: Small ribosomal subunit protein uS17 (82 aa).

The protein belongs to the universal ribosomal protein uS17 family. In terms of assembly, part of the 30S ribosomal subunit.

Its function is as follows. One of the primary rRNA binding proteins, it binds specifically to the 5'-end of 16S ribosomal RNA. This Afipia carboxidovorans (strain ATCC 49405 / DSM 1227 / KCTC 32145 / OM5) (Oligotropha carboxidovorans) protein is Small ribosomal subunit protein uS17.